Here is a 297-residue protein sequence, read N- to C-terminus: Phosphatidylinositol N-acetylglucosaminyltransferase subunit C (297 aa).

4 helical membrane passes run 67–87, 88–108, 153–173, and 239–259; these read VFVV…WLFG, TGLA…GGEG, AVFM…AAIV, and ALGG…LLLI.

It belongs to the PIGC family. As to quaternary structure, component of the glycosylphosphatidylinositol-N-acetylglucosaminyltransferase (GPI-GnT) complex composed at least by PIGA, PIGC, PIGH, PIGP, PIGQ, PIGY and DPM2. Interacts with PIGQ. Interacts with the heterodimer PIGA:PIGH.

Its subcellular location is the endoplasmic reticulum membrane. It participates in glycolipid biosynthesis; glycosylphosphatidylinositol-anchor biosynthesis. In terms of biological role, part of the glycosylphosphatidylinositol-N-acetylglucosaminyltransferase (GPI-GnT) complex that catalyzes the transfer of N-acetylglucosamine from UDP-N-acetylglucosamine to phosphatidylinositol and participates in the first step of GPI biosynthesis. In Bos taurus (Bovine), this protein is Phosphatidylinositol N-acetylglucosaminyltransferase subunit C.